A 689-amino-acid chain; its full sequence is Methionine--tRNA ligase (689 aa).

The 'HIGH' region signature appears at 15–25 (PYANGPIHLGH). Residues cysteine 146, cysteine 149, cysteine 159, and cysteine 162 each coordinate Zn(2+). Positions 332–336 (KMSKS) match the 'KMSKS' region motif. Lysine 335 is a binding site for ATP. The tRNA-binding domain maps to 588–689 (DFAKIDLRIA…EGAQPGMRVK (102 aa)).

This sequence belongs to the class-I aminoacyl-tRNA synthetase family. MetG type 1 subfamily. In terms of assembly, homodimer. Zn(2+) is required as a cofactor.

The protein resides in the cytoplasm. The enzyme catalyses tRNA(Met) + L-methionine + ATP = L-methionyl-tRNA(Met) + AMP + diphosphate. Its function is as follows. Is required not only for elongation of protein synthesis but also for the initiation of all mRNA translation through initiator tRNA(fMet) aminoacylation. This Shewanella sp. (strain W3-18-1) protein is Methionine--tRNA ligase.